We begin with the raw amino-acid sequence, 318 residues long: tRNA-modifying protein YgfZ (318 aa).

Trp-24 and Trp-185 together coordinate folate.

This sequence belongs to the tRNA-modifying YgfZ family.

It is found in the cytoplasm. In terms of biological role, folate-binding protein involved in regulating the level of ATP-DnaA and in the modification of some tRNAs. It is probably a key factor in regulatory networks that act via tRNA modification, such as initiation of chromosomal replication. In Buchnera aphidicola subsp. Baizongia pistaciae (strain Bp), this protein is tRNA-modifying protein YgfZ.